The following is a 167-amino-acid chain: 2-C-methyl-D-erythritol 2,4-cyclodiphosphate synthase (167 aa).

Residues Asp11 and His13 each coordinate a divalent metal cation. Residues 11–13 (DIH) and 37–38 (HS) contribute to the 4-CDP-2-C-methyl-D-erythritol 2-phosphate site. His45 contributes to the a divalent metal cation binding site. Residues 59-61 (DIG), 64-68 (FSDTD), 103-109 (AQAPKMA), and Arg145 contribute to the 4-CDP-2-C-methyl-D-erythritol 2-phosphate site.

Belongs to the IspF family. In terms of assembly, homotrimer. A divalent metal cation is required as a cofactor.

The catalysed reaction is 4-CDP-2-C-methyl-D-erythritol 2-phosphate = 2-C-methyl-D-erythritol 2,4-cyclic diphosphate + CMP. It participates in isoprenoid biosynthesis; isopentenyl diphosphate biosynthesis via DXP pathway; isopentenyl diphosphate from 1-deoxy-D-xylulose 5-phosphate: step 4/6. Its function is as follows. Involved in the biosynthesis of isopentenyl diphosphate (IPP) and dimethylallyl diphosphate (DMAPP), two major building blocks of isoprenoid compounds. Catalyzes the conversion of 4-diphosphocytidyl-2-C-methyl-D-erythritol 2-phosphate (CDP-ME2P) to 2-C-methyl-D-erythritol 2,4-cyclodiphosphate (ME-CPP) with a corresponding release of cytidine 5-monophosphate (CMP). The chain is 2-C-methyl-D-erythritol 2,4-cyclodiphosphate synthase from Nitrosomonas eutropha (strain DSM 101675 / C91 / Nm57).